Consider the following 220-residue polypeptide: Ribosomal RNA large subunit methyltransferase E (220 aa).

The S-adenosyl-L-methionine site is built by Gly-60, Trp-62, Asp-92, Asp-108, and Asp-133. Residue Lys-173 is the Proton acceptor of the active site.

The protein belongs to the class I-like SAM-binding methyltransferase superfamily. RNA methyltransferase RlmE family.

The protein resides in the cytoplasm. The enzyme catalyses uridine(2552) in 23S rRNA + S-adenosyl-L-methionine = 2'-O-methyluridine(2552) in 23S rRNA + S-adenosyl-L-homocysteine + H(+). In terms of biological role, specifically methylates the uridine in position 2552 of 23S rRNA at the 2'-O position of the ribose in the fully assembled 50S ribosomal subunit. This chain is Ribosomal RNA large subunit methyltransferase E, found in Burkholderia thailandensis (strain ATCC 700388 / DSM 13276 / CCUG 48851 / CIP 106301 / E264).